Here is a 347-residue protein sequence, read N- to C-terminus: Holliday junction branch migration complex subunit RuvB (347 aa).

Residues 1 to 183 (MTDVPRMVTP…FGIPVRLNFY (183 aa)) form a large ATPase domain (RuvB-L) region. ATP is bound by residues Leu-22, Arg-23, Gly-64, Lys-67, Thr-68, Thr-69, 130-132 (EDF), Arg-173, Tyr-183, and Arg-220. Position 68 (Thr-68) interacts with Mg(2+). A small ATPAse domain (RuvB-S) region spans residues 184 to 254 (TVDELEKIVS…IADHALGALE (71 aa)). A head domain (RuvB-H) region spans residues 257 to 347 (AAGLDAMDRR…QFGLFGGEDE (91 aa)). The DNA site is built by Arg-293, Arg-312, and Arg-317.

Belongs to the RuvB family. As to quaternary structure, homohexamer. Forms an RuvA(8)-RuvB(12)-Holliday junction (HJ) complex. HJ DNA is sandwiched between 2 RuvA tetramers; dsDNA enters through RuvA and exits via RuvB. An RuvB hexamer assembles on each DNA strand where it exits the tetramer. Each RuvB hexamer is contacted by two RuvA subunits (via domain III) on 2 adjacent RuvB subunits; this complex drives branch migration. In the full resolvosome a probable DNA-RuvA(4)-RuvB(12)-RuvC(2) complex forms which resolves the HJ.

Its subcellular location is the cytoplasm. It catalyses the reaction ATP + H2O = ADP + phosphate + H(+). Its function is as follows. The RuvA-RuvB-RuvC complex processes Holliday junction (HJ) DNA during genetic recombination and DNA repair, while the RuvA-RuvB complex plays an important role in the rescue of blocked DNA replication forks via replication fork reversal (RFR). RuvA specifically binds to HJ cruciform DNA, conferring on it an open structure. The RuvB hexamer acts as an ATP-dependent pump, pulling dsDNA into and through the RuvAB complex. RuvB forms 2 homohexamers on either side of HJ DNA bound by 1 or 2 RuvA tetramers; 4 subunits per hexamer contact DNA at a time. Coordinated motions by a converter formed by DNA-disengaged RuvB subunits stimulates ATP hydrolysis and nucleotide exchange. Immobilization of the converter enables RuvB to convert the ATP-contained energy into a lever motion, pulling 2 nucleotides of DNA out of the RuvA tetramer per ATP hydrolyzed, thus driving DNA branch migration. The RuvB motors rotate together with the DNA substrate, which together with the progressing nucleotide cycle form the mechanistic basis for DNA recombination by continuous HJ branch migration. Branch migration allows RuvC to scan DNA until it finds its consensus sequence, where it cleaves and resolves cruciform DNA. This Nitrobacter hamburgensis (strain DSM 10229 / NCIMB 13809 / X14) protein is Holliday junction branch migration complex subunit RuvB.